A 102-amino-acid polypeptide reads, in one-letter code: Polymeric immunoglobulin receptor (102 aa).

Interacts (mainly via CDR1-like domain) with dimeric IgA. Interacts (mainly via CDR2-like domain) with pentameric IgM. Either free or part of the secretory IgA (sIgA) complex that consists of two, four or five IgA monomers, and two additional non-Ig polypeptides, namely the JCHAIN and the secretory component (the proteolytic product of PIGR). Free secretory component interacts with bacterial antigens toxA of C.difficile and eaeA of E.coli. Post-translationally, N-glycosylated. N-glycosylation is required for anchoring IgA molecules to mucus, but is not necessary for Ig binding.

The protein localises to the cell membrane. The protein resides in the secreted. Its function is as follows. Mediates selective transcytosis of polymeric IgA and IgM across mucosal epithelial cells. Binds polymeric IgA and IgM at the basolateral surface of epithelial cells. The complex is then transported across the cell to be secreted at the apical surface. During this process, a cleavage occurs that separates the extracellular (known as the secretory component) from the transmembrane segment. Through its N-linked glycans ensures anchoring of secretory IgA (sIgA) molecules to mucus lining the epithelial surface to neutralize extracellular pathogens. On its own (free form) may act as a non-specific microbial scavenger to prevent pathogen interaction with epithelial cells. The protein is Polymeric immunoglobulin receptor (PIGR) of Sus scrofa (Pig).